Reading from the N-terminus, the 684-residue chain is Protein ecdysoneless (684 aa).

Over residues 491 to 501 (EPELDSDDDEP) the composition is skewed to acidic residues. 2 disordered regions span residues 491-528 (EPEL…CQRN) and 603-624 (TSVG…EDDF).

Belongs to the ECD family. Expressed in the ecdysone-producing larval ring gland, nervous system, imaginal disks and gonads.

Its subcellular location is the cytoplasm. Functionally, required in both the follicle cells and the germline for oocyte development. In Drosophila melanogaster (Fruit fly), this protein is Protein ecdysoneless.